The chain runs to 1020 residues: Valine--tRNA ligase (1020 aa).

Positions 45 to 55 match the 'HIGH' region motif; the sequence is PNVTGALHVGH. The short motif at 661–665 is the 'KMSKS' region element; that stretch reads KMSKT. Lys664 contributes to the ATP binding site. Residues 955–1020 adopt a coiled-coil conformation; that stretch reads AEKDRLEKAK…EALARLAELG (66 aa).

The protein belongs to the class-I aminoacyl-tRNA synthetase family. ValS type 1 subfamily. In terms of assembly, monomer.

It localises to the cytoplasm. It carries out the reaction tRNA(Val) + L-valine + ATP = L-valyl-tRNA(Val) + AMP + diphosphate. Functionally, catalyzes the attachment of valine to tRNA(Val). As ValRS can inadvertently accommodate and process structurally similar amino acids such as threonine, to avoid such errors, it has a 'posttransfer' editing activity that hydrolyzes mischarged Thr-tRNA(Val) in a tRNA-dependent manner. The sequence is that of Valine--tRNA ligase from Ruegeria pomeroyi (strain ATCC 700808 / DSM 15171 / DSS-3) (Silicibacter pomeroyi).